Reading from the N-terminus, the 322-residue chain is Quinolinate synthase (322 aa).

Residues H38 and S55 each contribute to the iminosuccinate site. C100 serves as a coordination point for [4Fe-4S] cluster. Residues 126–128 and S143 each bind iminosuccinate; that span reads YIN. C186 provides a ligand contact to [4Fe-4S] cluster. Residues 212–214 and T229 contribute to the iminosuccinate site; that span reads HPE. C279 lines the [4Fe-4S] cluster pocket.

The protein belongs to the quinolinate synthase family. Type 2 subfamily. [4Fe-4S] cluster serves as cofactor.

It is found in the cytoplasm. The catalysed reaction is iminosuccinate + dihydroxyacetone phosphate = quinolinate + phosphate + 2 H2O + H(+). It functions in the pathway cofactor biosynthesis; NAD(+) biosynthesis; quinolinate from iminoaspartate: step 1/1. Catalyzes the condensation of iminoaspartate with dihydroxyacetone phosphate to form quinolinate. The sequence is that of Quinolinate synthase from Cyanothece sp. (strain PCC 7425 / ATCC 29141).